Reading from the N-terminus, the 66-residue chain is Photosystem II reaction center protein H (66 aa).

A helical transmembrane segment spans residues 27 to 47 (GAVPIMTVIGLLLLVFLVILL).

It belongs to the PsbH family. PSII is composed of 1 copy each of membrane proteins PsbA, PsbB, PsbC, PsbD, PsbE, PsbF, PsbH, PsbI, PsbJ, PsbK, PsbL, PsbM, PsbT, PsbX, PsbY, Psb30/Ycf12, peripheral proteins PsbO, CyanoQ (PsbQ), PsbU, PsbV and a large number of cofactors. It forms dimeric complexes.

Its subcellular location is the cellular thylakoid membrane. In terms of biological role, one of the components of the core complex of photosystem II (PSII), required for its stability and/or assembly. PSII is a light-driven water:plastoquinone oxidoreductase that uses light energy to abstract electrons from H(2)O, generating O(2) and a proton gradient subsequently used for ATP formation. It consists of a core antenna complex that captures photons, and an electron transfer chain that converts photonic excitation into a charge separation. The chain is Photosystem II reaction center protein H from Prochlorococcus marinus (strain MIT 9515).